We begin with the raw amino-acid sequence, 128 residues long: 3-aminoacrylate deaminase RutC (128 aa).

It belongs to the RutC family. In terms of assembly, homotrimer.

The catalysed reaction is (Z)-3-aminoacrylate + H2O + H(+) = 3-oxopropanoate + NH4(+). Its function is as follows. Involved in pyrimidine catabolism. Catalyzes the deamination of 3-aminoacrylate to malonic semialdehyde, a reaction that can also occur spontaneously. RutC may facilitate the reaction and modulate the metabolic fitness, rather than catalyzing essential functions. The polypeptide is 3-aminoacrylate deaminase RutC (Escherichia coli O157:H7).